The following is a 367-amino-acid chain: Cyclin-dependent kinase 5 activator 2 (367 aa).

Over residues 1-11 (MGTVLSLSPAS) the composition is skewed to polar residues. 4 disordered regions span residues 1-56 (MGTV…RLKR), 72-98 (ASAKKKKGSKKVTPKPASTGPDPLVQQ), 131-175 (AAAT…GSPR), and 329-367 (GEAAASGGGPPSGGAPAASSAARDSCAAGTKHWTMNLDR). Residue glycine 2 is the site of N-myristoyl glycine attachment. Basic residues predominate over residues 74–84 (AKKKKGSKKVT). Threonine 84 is modified (phosphothreonine). The span at 131-148 (AAATCEPPSGGSAAAQPP) shows a compositional bias: low complexity. Residues 154 to 171 (KPPPPPPPAPQVAPPVPG) show a composition bias toward pro residues. The segment covering 342 to 357 (GAPAASSAARDSCAAG) has biased composition (low complexity).

This sequence belongs to the cyclin-dependent kinase 5 activator family. Heterodimer of a catalytic subunit and a regulatory subunit. Myristoylated. The Gly-2-Ala mutant is absent of the cell periphery, suggesting that a proper myristoylation signal is essential for the proper distribution of CDK5R2 (p39). Brain and neuron specific.

It is found in the cell membrane. In terms of biological role, activator of CDK5/TPKII. In Homo sapiens (Human), this protein is Cyclin-dependent kinase 5 activator 2 (CDK5R2).